We begin with the raw amino-acid sequence, 292 residues long: Homoserine kinase (292 aa).

Residue 84 to 94 (PLARGMGSSSA) participates in ATP binding.

Belongs to the GHMP kinase family. Homoserine kinase subfamily.

Its subcellular location is the cytoplasm. The enzyme catalyses L-homoserine + ATP = O-phospho-L-homoserine + ADP + H(+). It functions in the pathway amino-acid biosynthesis; L-threonine biosynthesis; L-threonine from L-aspartate: step 4/5. Functionally, catalyzes the ATP-dependent phosphorylation of L-homoserine to L-homoserine phosphate. This chain is Homoserine kinase, found in Thermus thermophilus (strain ATCC BAA-163 / DSM 7039 / HB27).